Reading from the N-terminus, the 218-residue chain is Elongation factor Ts (218 aa).

The tract at residues T82–V85 is involved in Mg(2+) ion dislocation from EF-Tu.

It belongs to the EF-Ts family.

It localises to the cytoplasm. Functionally, associates with the EF-Tu.GDP complex and induces the exchange of GDP to GTP. It remains bound to the aminoacyl-tRNA.EF-Tu.GTP complex up to the GTP hydrolysis stage on the ribosome. This Prochlorococcus marinus (strain NATL2A) protein is Elongation factor Ts.